The chain runs to 594 residues: DNA mismatch repair protein MutL (594 aa).

This sequence belongs to the DNA mismatch repair MutL/HexB family.

In terms of biological role, this protein is involved in the repair of mismatches in DNA. It is required for dam-dependent methyl-directed DNA mismatch repair. May act as a 'molecular matchmaker', a protein that promotes the formation of a stable complex between two or more DNA-binding proteins in an ATP-dependent manner without itself being part of a final effector complex. In Tolumonas auensis (strain DSM 9187 / NBRC 110442 / TA 4), this protein is DNA mismatch repair protein MutL.